The chain runs to 133 residues: Large ribosomal subunit protein bL12 (133 aa).

Belongs to the bacterial ribosomal protein bL12 family. Homodimer. Part of the ribosomal stalk of the 50S ribosomal subunit. Forms a multimeric L10(L12)X complex, where L10 forms an elongated spine to which 2 to 4 L12 dimers bind in a sequential fashion. Binds GTP-bound translation factors.

In terms of biological role, forms part of the ribosomal stalk which helps the ribosome interact with GTP-bound translation factors. Is thus essential for accurate translation. This is Large ribosomal subunit protein bL12 from Ehrlichia chaffeensis (strain ATCC CRL-10679 / Arkansas).